Reading from the N-terminus, the 1019-residue chain is Alpha-mannosidase At3g26720 (1019 aa).

The first 22 residues, 1-22 (MAVKCFSLYLILAAIVIGGVTS), serve as a signal peptide directing secretion. Residues His-47 and Asp-49 each coordinate Zn(2+). Asn-64 is a glycosylation site (N-linked (GlcNAc...) asparagine). Residue Asp-169 participates in Zn(2+) binding. N-linked (GlcNAc...) asparagine glycosylation is found at Asn-278 and Asn-336. His-410 is a Zn(2+) binding site. Cys-466 and Cys-474 form a disulfide bridge. N-linked (GlcNAc...) asparagine glycans are attached at residues Asn-470, Asn-638, Asn-730, and Asn-820. A disulfide bridge connects residues Cys-824 and Cys-829.

This sequence belongs to the glycosyl hydrolase 38 family. In terms of assembly, homodimer. Requires Zn(2+) as cofactor.

It catalyses the reaction Hydrolysis of terminal, non-reducing alpha-D-mannose residues in alpha-D-mannosides.. In terms of biological role, liberates mannose from p-nitrophenyl-alpha-D-mannoside in vitro. The sequence is that of Alpha-mannosidase At3g26720 from Arabidopsis thaliana (Mouse-ear cress).